Here is a 432-residue protein sequence, read N- to C-terminus: CinA-like protein (432 aa).

Belongs to the CinA family.

The protein is CinA-like protein of Colwellia psychrerythraea (strain 34H / ATCC BAA-681) (Vibrio psychroerythus).